Consider the following 258-residue polypeptide: L-aminoadipate-semialdehyde dehydrogenase-phosphopantetheinyl transferase (258 aa).

It belongs to the P-Pant transferase superfamily. AcpS family.

The protein localises to the cytoplasm. It localises to the nucleus. The catalysed reaction is apo-[ACP] + CoA = holo-[ACP] + adenosine 3',5'-bisphosphate + H(+). In terms of biological role, catalyzes the transfer of a 4'-phosphopantetheine moiety from coenzyme A to a serine residue of acceptor proteins, such as alpha-aminoadipate reductase. Necessary for alpha-aminoadipate reductase activity. The protein is L-aminoadipate-semialdehyde dehydrogenase-phosphopantetheinyl transferase (lys7) of Schizosaccharomyces pombe (strain 972 / ATCC 24843) (Fission yeast).